Here is a 278-residue protein sequence, read N- to C-terminus: 3-methyl-2-oxobutanoate hydroxymethyltransferase (278 aa).

Mg(2+) is bound by residues Asp-44 and Asp-83. 3-methyl-2-oxobutanoate-binding positions include 44–45 (DS), Asp-83, and Lys-112. Residue Glu-114 participates in Mg(2+) binding. The active-site Proton acceptor is Glu-181.

This sequence belongs to the PanB family. Homodecamer; pentamer of dimers. Requires Mg(2+) as cofactor.

Its subcellular location is the cytoplasm. It carries out the reaction 3-methyl-2-oxobutanoate + (6R)-5,10-methylene-5,6,7,8-tetrahydrofolate + H2O = 2-dehydropantoate + (6S)-5,6,7,8-tetrahydrofolate. The protein operates within cofactor biosynthesis; (R)-pantothenate biosynthesis; (R)-pantoate from 3-methyl-2-oxobutanoate: step 1/2. Functionally, catalyzes the reversible reaction in which hydroxymethyl group from 5,10-methylenetetrahydrofolate is transferred onto alpha-ketoisovalerate to form ketopantoate. This is 3-methyl-2-oxobutanoate hydroxymethyltransferase from Roseiflexus sp. (strain RS-1).